The following is a 329-amino-acid chain: Basic leucine zipper 61 (329 aa).

Disordered regions lie at residues 1–22 (MAQLPPKIPTMTTPNWPDFSSQ) and 98–204 (DDVH…HDPK). Residues 10–22 (TMTTPNWPDFSSQ) are compositionally biased toward polar residues. Residues 119–133 (PTRSSSNTSTPSDHN) show a composition bias toward low complexity. Basic and acidic residues predominate over residues 139–154 (DNNKEAPPSDHDHHMD). Over residues 155 to 169 (NNVANQNNAAGNNYN) the composition is skewed to low complexity. The bZIP domain maps to 202–254 (DPKRVKRILANRQSAQRSRVRKLQYISELERSVTSLQTEVSVLSPRVAFLDHQ). Residues 204–223 (KRVKRILANRQSAQRSRVRK) are basic motif. The segment at 230–251 (LERSVTSLQTEVSVLSPRVAFL) is leucine-zipper. Residues 304–313 (KMENNVSDQS) show a composition bias toward polar residues. The disordered stretch occupies residues 304–329 (KMENNVSDQSPADIKPSVEKEQLLNV). A compositionally biased stretch (basic and acidic residues) spans 319 to 329 (PSVEKEQLLNV).

Forms heterodimers with BZIP18, BZIP43 and VIP1/BZIP51.

Its subcellular location is the nucleus. In terms of biological role, transcriptional activator. The polypeptide is Basic leucine zipper 61 (Arabidopsis thaliana (Mouse-ear cress)).